Here is a 130-residue protein sequence, read N- to C-terminus: Small ribosomal subunit protein uS8 (130 aa).

This sequence belongs to the universal ribosomal protein uS8 family. In terms of assembly, part of the 30S ribosomal subunit.

Its function is as follows. One of the primary rRNA binding proteins, it binds directly to 16S rRNA central domain where it helps coordinate assembly of the platform of the 30S subunit. In Caldivirga maquilingensis (strain ATCC 700844 / DSM 13496 / JCM 10307 / IC-167), this protein is Small ribosomal subunit protein uS8.